A 195-amino-acid polypeptide reads, in one-letter code: Pyridoxal 5'-phosphate synthase subunit PdxT (195 aa).

46–48 (GES) is an L-glutamine binding site. Catalysis depends on cysteine 78, which acts as the Nucleophile. Residues arginine 107 and 136-137 (IR) contribute to the L-glutamine site. Residues histidine 173 and glutamate 175 each act as charge relay system in the active site.

This sequence belongs to the glutaminase PdxT/SNO family. In the presence of PdxS, forms a dodecamer of heterodimers. Only shows activity in the heterodimer.

It carries out the reaction aldehydo-D-ribose 5-phosphate + D-glyceraldehyde 3-phosphate + L-glutamine = pyridoxal 5'-phosphate + L-glutamate + phosphate + 3 H2O + H(+). The enzyme catalyses L-glutamine + H2O = L-glutamate + NH4(+). It participates in cofactor biosynthesis; pyridoxal 5'-phosphate biosynthesis. Catalyzes the hydrolysis of glutamine to glutamate and ammonia as part of the biosynthesis of pyridoxal 5'-phosphate. The resulting ammonia molecule is channeled to the active site of PdxS. The sequence is that of Pyridoxal 5'-phosphate synthase subunit PdxT from Dehalococcoides mccartyi (strain CBDB1).